The chain runs to 403 residues: Betaine--homocysteine S-methyltransferase 1 (403 aa).

Positions 8–311 constitute a Hcy-binding domain; sequence KGLLERLDAG…YHTRAIAEEL (304 aa). Positions 214, 296, and 297 each coordinate Zn(2+).

In terms of assembly, homotetramer. Zn(2+) serves as cofactor.

It localises to the cytoplasm. It catalyses the reaction L-homocysteine + glycine betaine = N,N-dimethylglycine + L-methionine. It functions in the pathway amine and polyamine degradation; betaine degradation; sarcosine from betaine: step 1/2. It participates in amino-acid biosynthesis; L-methionine biosynthesis via de novo pathway; L-methionine from L-homocysteine (BhmT route): step 1/1. Functionally, involved in the regulation of homocysteine metabolism. Converts betaine and homocysteine to dimethylglycine and methionine, respectively. This reaction is also required for the irreversible oxidation of choline. This Xenopus laevis (African clawed frog) protein is Betaine--homocysteine S-methyltransferase 1 (bhmt).